The primary structure comprises 311 residues: Acetyl-coenzyme A carboxylase carboxyl transferase subunit alpha (311 aa).

Residues 32–289 (ELNLLEERLR…KSVLEQKLAQ (258 aa)) enclose the CoA carboxyltransferase C-terminal domain.

This sequence belongs to the AccA family. Acetyl-CoA carboxylase is a heterohexamer composed of biotin carboxyl carrier protein (AccB), biotin carboxylase (AccC) and two subunits each of ACCase subunit alpha (AccA) and ACCase subunit beta (AccD).

Its subcellular location is the cytoplasm. It carries out the reaction N(6)-carboxybiotinyl-L-lysyl-[protein] + acetyl-CoA = N(6)-biotinyl-L-lysyl-[protein] + malonyl-CoA. The protein operates within lipid metabolism; malonyl-CoA biosynthesis; malonyl-CoA from acetyl-CoA: step 1/1. Component of the acetyl coenzyme A carboxylase (ACC) complex. First, biotin carboxylase catalyzes the carboxylation of biotin on its carrier protein (BCCP) and then the CO(2) group is transferred by the carboxyltransferase to acetyl-CoA to form malonyl-CoA. The polypeptide is Acetyl-coenzyme A carboxylase carboxyl transferase subunit alpha (Exiguobacterium sibiricum (strain DSM 17290 / CCUG 55495 / CIP 109462 / JCM 13490 / 255-15)).